A 186-amino-acid chain; its full sequence is Outer-membrane lipoprotein LolB (186 aa).

The N-terminal stretch at 1–16 (MRRLAVIASLAWALGG) is a signal peptide. A lipid anchor (N-palmitoyl cysteine) is attached at Cys17. Cys17 carries S-diacylglycerol cysteine lipidation.

The protein belongs to the LolB family. Monomer.

It localises to the cell outer membrane. Its function is as follows. Plays a critical role in the incorporation of lipoproteins in the outer membrane after they are released by the LolA protein. This is Outer-membrane lipoprotein LolB from Thiobacillus denitrificans (strain ATCC 25259 / T1).